The sequence spans 557 residues: MKMGFLFLFCYLLAFLGYSPVDAAVKKYQFDVQVKNISRICNAKPIVTVNGMFPGPTVYAREGDRVIINVTNHVQYNMSIHWHGLKQYRNGWADGPAYITQCPIQTGQSYLYDFNVTGQRGTLWWHAHILWLRATVYGAIVILPAPGKPYPFPQPYQESNIILGEWWNKDVETAVNQANQLGAPPPMSDAHTINGKPGPLFPCSEKHTFVIEAEAGKTYLLRIINAALNDELFFGIAGHNMTVVEIDAVYTKPFTTKAILLGPGQTTNVLVKTDRSPNRYFMAASPFMDAPVSVDNKTVTAILQYKGVPNTVLPILPKLPLPNDTSFALDYNGKLKSLNTPNFPALVPLKVDRRLFYTIGLGINACPTCVNGTNLAASINNITFIMPKTALLKAHYSNISGVFRTDFPDRPPKAFNYTGVPLTANLGTSTGTRLSRVKFNTTIELVLQDTNLLTVESHPFHLHGYNFFVVGTGVGNFDPKKDPAKFNLVDPPERNTVGVPTGGWAAIRFRADNPGVWFMHCHLEVHTMWGLKMAFVVENGETPELSVLPPPKDYPSC.

Residues 1–23 (MKMGFLFLFCYLLAFLGYSPVDA) form the signal peptide. Plastocyanin-like domains follow at residues 31–147 (DVQV…PAPG) and 158–308 (ESNI…YKGV). Residues asparagine 36, asparagine 69, and asparagine 77 are each glycosylated (N-linked (GlcNAc...) asparagine). Cu cation-binding residues include histidine 81 and histidine 83. N-linked (GlcNAc...) asparagine glycosylation occurs at asparagine 115. Cu cation-binding residues include histidine 126 and histidine 128. Asparagine 240, asparagine 296, asparagine 323, asparagine 371, asparagine 381, asparagine 398, asparagine 416, and asparagine 440 each carry an N-linked (GlcNAc...) asparagine glycan. One can recognise a Plastocyanin-like 3 domain in the interval 406–541 (DFPDRPPKAF…KMAFVVENGE (136 aa)). Positions 458, 461, 463, 520, 521, 522, and 526 each coordinate Cu cation.

It belongs to the multicopper oxidase family. Requires Cu cation as cofactor. As to expression, ubiquitous and constitutive.

It is found in the secreted. It localises to the extracellular space. The protein localises to the apoplast. The catalysed reaction is 4 hydroquinone + O2 = 4 benzosemiquinone + 2 H2O. Lignin degradation and detoxification of lignin-derived products. The chain is Laccase-11 (LAC11) from Arabidopsis thaliana (Mouse-ear cress).